A 134-amino-acid polypeptide reads, in one-letter code: Zinc finger protein 593 (134 aa).

Residues 1–25 (MGRSRRTGAHRAHSLARQMKAKKRR) are compositionally biased toward basic residues. Disordered regions lie at residues 1–58 (MGRS…LPGG) and 85–134 (HKKR…DTST). Basic and acidic residues predominate over residues 26–36 (PDLDEIHRELR). A C2H2-type zinc finger spans residues 61-85 (HRCLACARYFIDSANLKTHFRSKDH).

Belongs to the ZNF593/BUD20 C2H2-type zinc-finger protein family. In terms of assembly, associates with pre-60S ribosomal particles.

The protein resides in the nucleus. It localises to the nucleolus. It is found in the cytoplasm. In terms of biological role, involved in pre-60S ribosomal particles maturation by promoting the nuclear export of the 60S ribosome. Negatively modulates the DNA binding activity of Oct-2 and therefore its transcriptional regulatory activity. This chain is Zinc finger protein 593 (Znf593), found in Mus musculus (Mouse).